Reading from the N-terminus, the 1016-residue chain is Kinesin-like protein KIN-14K (1016 aa).

The region spanning 14–121 (ADRRAEVIEW…CLLVLRESVS (108 aa)) is the Calponin-homology (CH) domain. The tract at residues 123–176 (GLRDGTSKAPLRKKWRVPETGEPLVPGVAQGKTSPGEDKRNGLPDPKSQQKTPI) is disordered. A coiled-coil region spans residues 288–354 (VNGTNEENQM…EVMTSMHEQQ (67 aa)). Residues 481–808 (NIRVYCRVRP…LKFAERVSGV (328 aa)) form the Kinesin motor domain. Residue 565–572 (GQTGSGKT) participates in ATP binding. A coiled-coil region spans residues 820–852 (KDIKELLEQVASLKDTIVRKDTEIEQLQLMKDK). Polar residues-rich tracts occupy residues 884 to 893 (NQQSQLSDPQ) and 990 to 1004 (KTPN…QLIG). Disordered stretches follow at residues 884 to 912 (NQQS…DITP) and 971 to 1016 (LTKN…RWQK).

Belongs to the TRAFAC class myosin-kinesin ATPase superfamily. Kinesin family. KIN-14 subfamily.

This Oryza sativa subsp. japonica (Rice) protein is Kinesin-like protein KIN-14K.